Here is a 129-residue protein sequence, read N- to C-terminus: Follitropin subunit beta (129 aa).

The first 18 residues, 1–18, serve as a signal peptide directing secretion; sequence MKSVQFCFLFCCWRAICC. 6 disulfides stabilise this stretch: Cys-21-Cys-69, Cys-35-Cys-84, Cys-38-Cys-122, Cys-46-Cys-100, Cys-50-Cys-102, and Cys-105-Cys-112. N-linked (GlcNAc...) asparagine glycosylation is found at Asn-25 and Asn-42.

It belongs to the glycoprotein hormones subunit beta family. As to quaternary structure, heterodimer. The active follitropin is a heterodimer composed of an alpha chain/CGA shared with other hormones and a unique beta chain/FSHB shown here.

The protein resides in the secreted. Its function is as follows. Together with the alpha chain CGA constitutes follitropin, the follicle-stimulating hormone, and provides its biological specificity to the hormone heterodimer. Binds FSHR, a G protein-coupled receptor, on target cells to activate downstream signaling pathways. Follitropin is involved in follicle development and spermatogenesis in reproductive organs. This Capra hircus (Goat) protein is Follitropin subunit beta (FSHB).